A 108-amino-acid chain; its full sequence is NADH dehydrogenase [ubiquinone] flavoprotein 3, mitochondrial (108 aa).

A mitochondrion-targeting transit peptide spans 1 to 34 (MAAPCLLRQGRAGALKTMLQEAQVFRGLASTVSL). The tract at residues 33-72 (SLSAESGKSEKGQPQNSKKQSPPKKPAPVPAEPFDNTTYK) is disordered. Residue S105 is modified to Phosphoserine.

The protein belongs to the complex I NDUFV3 subunit family. In terms of assembly, complex I is composed of 45 different subunits. This is a component of the flavoprotein-sulfur (FP) fragment of the enzyme.

Its subcellular location is the mitochondrion inner membrane. In terms of biological role, accessory subunit of the mitochondrial membrane respiratory chain NADH dehydrogenase (Complex I), that is believed not to be involved in catalysis. Complex I functions in the transfer of electrons from NADH to the respiratory chain. The immediate electron acceptor for the enzyme is believed to be ubiquinone. May be the terminally assembled subunit of Complex I. This Homo sapiens (Human) protein is NADH dehydrogenase [ubiquinone] flavoprotein 3, mitochondrial (NDUFV3).